Here is a 478-residue protein sequence, read N- to C-terminus: Probable cyclin-dependent kinase 9 (478 aa).

The span at 1–17 (MSAQNYHAGLHQSSTQR) shows a compositional bias: polar residues. Positions 1 to 55 (MSAQNYHAGLHQSSTQRPPKRPNTEHAQEPPKRALIGGQTTPSSSGGGQTPNGTN) are disordered. A compositionally biased stretch (basic and acidic residues) spans 22–32 (PNTEHAQEPPK). A Protein kinase domain is found at 85-413 (YEKLNKIGQG…SDEAEDDIWF (329 aa)). Residues 91-99 (IGQGTFGEV) and Lys114 contribute to the ATP site. Asp217 (proton acceptor) is an active-site residue. The tract at residues 444-478 (HANRGRHQNAQQRPNQQQARPSNAIPAGQYRDTIF) is disordered. The segment covering 451–464 (QNAQQRPNQQQARP) has biased composition (low complexity).

The protein belongs to the protein kinase superfamily. CMGC Ser/Thr protein kinase family. CDC2/CDKX subfamily. As to quaternary structure, associates with cyclin-T (cit-1.1 or cit-1.2) to form P-TEFb.

It localises to the nucleus. It carries out the reaction L-seryl-[protein] + ATP = O-phospho-L-seryl-[protein] + ADP + H(+). It catalyses the reaction L-threonyl-[protein] + ATP = O-phospho-L-threonyl-[protein] + ADP + H(+). The catalysed reaction is [DNA-directed RNA polymerase] + ATP = phospho-[DNA-directed RNA polymerase] + ADP + H(+). Its function is as follows. Essential member of the cyclin-dependent kinase pair (CDK9/cyclin-T) complex, also called positive transcription elongation factor B (P-TEFb), which is proposed to facilitate the transition from abortive to production elongation by phosphorylating the CTD (C-terminal domain) of the large subunit of RNA polymerase II (RNAP II) and spt-5. The protein is Probable cyclin-dependent kinase 9 (cdk-9) of Caenorhabditis elegans.